The sequence spans 144 residues: Globin-1 (144 aa).

The Globin domain occupies 1–141 (VSANDIKNVQ…ILHQMSSYFA (141 aa)). A heme b-binding site is contributed by H89.

Belongs to the globin family. As to quaternary structure, homodimer.

The chain is Globin-1 from Phreagena soyoae (Deep-sea cold-seep clam).